The following is a 302-amino-acid chain: Oxygen-dependent coproporphyrinogen-III oxidase (302 aa).

A substrate-binding site is contributed by Ser-94. A divalent metal cation-binding residues include His-98 and His-108. The active-site Proton donor is His-108. Residue 110–112 participates in substrate binding; that stretch reads NVR. 2 residues coordinate a divalent metal cation: His-147 and His-177. The segment at 242–277 is important for dimerization; it reads YVEFNLVWDRGTLFGLQTGGRTESILMSMPPLVRWE. 260–262 is a substrate binding site; sequence GGR.

The protein belongs to the aerobic coproporphyrinogen-III oxidase family. Homodimer. A divalent metal cation is required as a cofactor.

The protein resides in the cytoplasm. It catalyses the reaction coproporphyrinogen III + O2 + 2 H(+) = protoporphyrinogen IX + 2 CO2 + 2 H2O. It functions in the pathway porphyrin-containing compound metabolism; protoporphyrin-IX biosynthesis; protoporphyrinogen-IX from coproporphyrinogen-III (O2 route): step 1/1. Its function is as follows. Involved in the heme biosynthesis. Catalyzes the aerobic oxidative decarboxylation of propionate groups of rings A and B of coproporphyrinogen-III to yield the vinyl groups in protoporphyrinogen-IX. The polypeptide is Oxygen-dependent coproporphyrinogen-III oxidase (Erwinia tasmaniensis (strain DSM 17950 / CFBP 7177 / CIP 109463 / NCPPB 4357 / Et1/99)).